A 152-amino-acid chain; its full sequence is D-aminoacyl-tRNA deacylase (152 aa).

The short motif at 142-143 (GP) is the Gly-cisPro motif, important for rejection of L-amino acids element.

This sequence belongs to the DTD family. Homodimer.

The protein resides in the cytoplasm. The enzyme catalyses glycyl-tRNA(Ala) + H2O = tRNA(Ala) + glycine + H(+). It carries out the reaction a D-aminoacyl-tRNA + H2O = a tRNA + a D-alpha-amino acid + H(+). Functionally, an aminoacyl-tRNA editing enzyme that deacylates mischarged D-aminoacyl-tRNAs. Also deacylates mischarged glycyl-tRNA(Ala), protecting cells against glycine mischarging by AlaRS. Acts via tRNA-based rather than protein-based catalysis; rejects L-amino acids rather than detecting D-amino acids in the active site. By recycling D-aminoacyl-tRNA to D-amino acids and free tRNA molecules, this enzyme counteracts the toxicity associated with the formation of D-aminoacyl-tRNA entities in vivo and helps enforce protein L-homochirality. The chain is D-aminoacyl-tRNA deacylase from Burkholderia multivorans (strain ATCC 17616 / 249).